The chain runs to 211 residues: PITH domain-containing protein 1 (211 aa).

The region spanning 20–192 (EPPEQRGLAY…EVTICNYEAS (173 aa)) is the PITH domain. At Y189 the chain carries Phosphotyrosine.

Belongs to the PITHD1 family. As to expression, down-regulated in primary acute myeloid leukemia (AML) patients.

It localises to the cytoplasm. Its function is as follows. Promotes megakaryocyte differentiation by up-regulating RUNX1 expression. Regulates RUNX1 expression by activating the proximal promoter of the RUNX1 gene and by enhancing the translation activity of an internal ribosome entry site (IRES) element in the RUNX1 gene. The sequence is that of PITH domain-containing protein 1 (PITHD1) from Homo sapiens (Human).